Reading from the N-terminus, the 177-residue chain is UPF0316 protein STH2077 (177 aa).

The next 2 helical transmembrane spans lie at 9 to 29 (AALDLLIIFLAQATYVSVNTV) and 41 to 61 (LASAISFFEVILWVYALGLVV).

Belongs to the UPF0316 family.

Its subcellular location is the cell membrane. In Symbiobacterium thermophilum (strain DSM 24528 / JCM 14929 / IAM 14863 / T), this protein is UPF0316 protein STH2077.